We begin with the raw amino-acid sequence, 251 residues long: MSVTMRQMLEAGVHFGHQTRFWNPKMAPYIFGQRNKIHIVNLEHTLVMLREALDYARRLTANKGTILFVGTKRQARDIVMEEAIRCGAPYVNQRWLGGMLTNFKTIRQSIKRLQDMEKMVQDGTLNKLTKKEALDFQRELEKLNNSLGGIKEMKGLPDAMFVIDVGYQKGAIVEADKLGIPVVGVVDTNHSPAGVRYVVPGNDDSSQAIRLYARAMADAILEGRNQSVQEIIEMSKSDDEIMSGRDQSAGA.

The protein belongs to the universal ribosomal protein uS2 family.

This is Small ribosomal subunit protein uS2 from Nitrosomonas europaea (strain ATCC 19718 / CIP 103999 / KCTC 2705 / NBRC 14298).